The sequence spans 1476 residues: MQKSPLEKASFISKLFFSWTTPILRKGYRHHLELSDIYQAPSSDSADHLSEKLEREWDREQASKKKPQLIHALRRCFVWRFVFYGVLLYLGEVTKAVQPVLLGRIIASYDPDNTEERSIAIYLGIGLCLLFIVRTLLLHPAIFGLHHIGMQMRIAMFSLIYKKTLKLSSRVLDKISIGQLISLLSNNLNKFDEGLALAHFIWIAPLQVVLLMGLLWDLLQFSAFCGLGLLIVLVIFQAILGKMMVKYRDKRAAKINERLVITSEVIDNIYSVKAYCWESAMEKIIESLREEELKMTRRSAYMRFFTSSAFFFSGFFVVFLSVLPYTVINGIVLRKIFTTISFCIVLRMSVTRQFPTAVQIWYDSLGMIRKIQDFLQTQEYKVLEYNLMFTGLVMENVTAFWEEGFQELLEKVQLNNDDRKTSNGENHLSFSHLCLVGNPVLKNINLNIKKGEMLAITGSTGAGKTSLLMLILGELEASEGIIKHSGRVSFSSQISWIMPGTIKENIIFGVSYDEYRYKSVVKACQLQEDITKFAEQDNTVLGEGGVTLSGGQRARISLARAVYKDADLYLLDSPFGYLDVLTEEQIFESCVCKLMASKTRILVTSKMEQLKKADKILILHEGSSYFYGTFSELQSLRPDFSSKLMGYDTFDQFTEERRSSILTETLRRFSVDDASTTWNKAKQSFRQTGEFGEKRKNSILSSFSSVKKISIVQKTPLSIEGESDDLQERRLSLVPDSEHGEAALPRSNMITAGPTFPGRRRQSVLDLMTFTPSSVSSSLQRTRASIRKISLAPRISLKEEDIYSRRLSQDSTLNITEEINEEDLKECFFDDMVKIPTVTTWNTYLRYFTLHRGLFAVLIWCVLVFLVEVAASLFVLWLLKNNPVNGGNNGTKIANTSYVVVITSSSFYYIFYIYVGVADTLLALSLFRGLPLVHTLITASKILHRKMLHSILHAPMSTFNKLKAGGILNRFSKDIAILDDFLPLTIFDFIQLLFIVVGAIIVVSALQPYIFLATVPGLAVFILLRAYFLHTSQQLKQLESEGRSPIFTHLVTSLKGLWTLRAFRRQTYFETLFHKALNLHTANWFMYLATLRWFQMRIDMIFVLFFIVVTFISILTTGEGEGTTGIILTLAMNIMSTLQWAVNSSIDTDSLMRSVSRVFKFIDIQTEESICTKIMKELHSEDSPNALVIKNEHVKKCDTWPSGGEMVVKDLTVKYVDDGNAILENISFSISPGQRVGLLGRTGSGKSTLLSAFLRMLNIKGEIQIDGVSWNSMTLQEWRKAFGVITQKVFIFSGTFRQNLDPNGKWRDEEIWKVADQVGLKSVIEQFPGQLNFTLVDGGYVLSHGHKQLMCLARSVLSKAKIILLDEPSANLDPITYQVIRRVLRQAFAGCTVVLCEHRIEAMLDCQRFLVIEQGNVWQYESLQALLSEKSVFQRALSSSEKMKLFHGRHSSKQKPRTQITAVKEETEEEVQETRL.

The Cytoplasmic segment spans residues 1–77; it reads MQKSPLEKAS…QLIHALRRCF (77 aa). Residues 78 to 98 form a helical membrane-spanning segment; it reads VWRFVFYGVLLYLGEVTKAVQ. An ABC transmembrane type-1 1 domain is found at 81 to 365; sequence FVFYGVLLYL…TAVQIWYDSL (285 aa). At 99-122 the chain is on the extracellular side; that stretch reads PVLLGRIIASYDPDNTEERSIAIY. The chain crosses the membrane as a helical span at residues 123-146; it reads LGIGLCLLFIVRTLLLHPAIFGLH. Residues 147 to 195 are Cytoplasmic-facing; it reads HIGMQMRIAMFSLIYKKTLKLSSRVLDKISIGQLISLLSNNLNKFDEGL. The chain crosses the membrane as a helical span at residues 196-216; sequence ALAHFIWIAPLQVVLLMGLLW. The Extracellular segment spans residues 217–222; the sequence is DLLQFS. The helical transmembrane segment at 223-243 threads the bilayer; the sequence is AFCGLGLLIVLVIFQAILGKM. At 244–298 the chain is on the cytoplasmic side; it reads MVKYRDKRAAKINERLVITSEVIDNIYSVKAYCWESAMEKIIESLREEELKMTRR. Residues 299 to 319 form a helical membrane-spanning segment; sequence SAYMRFFTSSAFFFSGFFVVF. Over 320–339 the chain is Extracellular; it reads LSVLPYTVINGIVLRKIFTT. Residues 340-358 traverse the membrane as a helical segment; it reads ISFCIVLRMSVTRQFPTAV. Over 359–853 the chain is Cytoplasmic; it reads QIWYDSLGMI…YLRYFTLHRG (495 aa). Residues tryptophan 401, 458 to 465, and glutamine 493 contribute to the ATP site; that span reads GSTGAGKT. The 235-residue stretch at 412 to 646 folds into the ABC transporter 1 domain; that stretch reads VQLNNDDRKT…RPDFSSKLMG (235 aa). The S-palmitoyl cysteine moiety is linked to residue cysteine 524. Phosphoserine is present on residues serine 549 and serine 660. The interval 654–826 is disordered R region; the sequence is TEERRSSILT…EEINEEDLKE (173 aa). A Phosphoserine; by PKA modification is found at serine 670. A phosphoserine mark is found at serine 684, serine 698, and serine 710. A Phosphothreonine modification is found at threonine 715. A phosphoserine mark is found at serine 732, serine 763, serine 785, serine 790, and serine 808. The helical transmembrane segment at 854–874 threads the bilayer; sequence LFAVLIWCVLVFLVEVAASLF. The 300-residue stretch at 854–1153 folds into the ABC transmembrane type-1 2 domain; sequence LFAVLIWCVL…SSIDTDSLMR (300 aa). At 875 to 913 the chain is on the extracellular side; sequence VLWLLKNNPVNGGNNGTKIANTSYVVVITSSSFYYIFYI. N-linked (GlcNAc...) asparagine glycans are attached at residues asparagine 889 and asparagine 895. Residues 914–934 form a discontinuously helical membrane-spanning segment; sequence YVGVADTLLALSLFRGLPLVH. The Cytoplasmic segment spans residues 935-985; that stretch reads TLITASKILHRKMLHSILHAPMSTFNKLKAGGILNRFSKDIAILDDFLPLT. The chain crosses the membrane as a helical span at residues 986-1006; it reads IFDFIQLLFIVVGAIIVVSAL. Over 1007–1008 the chain is Extracellular; that stretch reads QP. The chain crosses the membrane as a helical span at residues 1009-1029; the sequence is YIFLATVPGLAVFILLRAYFL. Topologically, residues 1030 to 1090 are cytoplasmic; sequence HTSQQLKQLE…TANWFMYLAT (61 aa). A helical membrane pass occupies residues 1091 to 1111; it reads LRWFQMRIDMIFVLFFIVVTF. Over 1112–1125 the chain is Extracellular; that stretch reads ISILTTGEGEGTTG. Residues 1126–1146 form a helical membrane-spanning segment; it reads IILTLAMNIMSTLQWAVNSSI. Residues 1147 to 1476 are Cytoplasmic-facing; sequence DTDSLMRSVS…TEEEVQETRL (330 aa). The ABC transporter 2 domain occupies 1208–1439; the sequence is VKDLTVKYVD…KSVFQRALSS (232 aa). ATP contacts are provided by residues tyrosine 1215 and 1240–1247; that span reads GRTGSGKS. An interaction with GORASP2 region spans residues 1382–1476; sequence RVLRQAFAGC…TEEEVQETRL (95 aa). The S-palmitoyl cysteine moiety is linked to residue cysteine 1391. Phosphoserine is present on residues serine 1440 and serine 1452. Over residues 1445–1456 the composition is skewed to basic residues; the sequence is LFHGRHSSKQKP. Residues 1445–1476 are disordered; that stretch reads LFHGRHSSKQKPRTQITAVKEETEEEVQETRL. Over residues 1466–1476 the composition is skewed to acidic residues; it reads ETEEEVQETRL. The PDZ-binding signature appears at 1474 to 1476; that stretch reads TRL.

It belongs to the ABC transporter superfamily. ABCC family. CFTR transporter (TC 3.A.1.202) subfamily. As to quaternary structure, monomer; does not require oligomerization for channel activity. May form oligomers in the membrane. Interacts with SLC4A7 through NHERF1. Interacts with SHANK2. Interacts with NHERF1 and MYO6. Interacts (via C-terminus) with GOPC (via PDZ domain); this promotes CFTR internalization and thereby decreases channel activity. Interacts with SLC4A7 through NHERF1. Found in a complex with MYO5B and RAB11A. Interacts with ANO1. Interacts with SLC26A8. Interacts with AHCYL1; the interaction increases CFTR activity. Interacts with CSE1L. The core-glycosylated form interacts with GORASP2 (via PDZ GRASP-type 1 domain) in respone to ER stress. Interacts with MARCHF2; the interaction leads to CFTR ubiqtuitination and degradation. Interacts with ADGRG2. Post-translationally, N-glycosylated. In terms of processing, phosphorylated; cAMP treatment promotes phosphorylation and activates the channel. Dephosphorylation decreases the ATPase activity (in vitro). Phosphorylation at PKA sites activates the channel. Phosphorylation at PKC sites enhances the response to phosphorylation by PKA. Phosphorylated by AMPK; this inhibits channel activity. Ubiquitinated, leading to its degradation in the lysosome. Deubiquitination by USP10 in early endosomes enhances its endocytic recycling to the cell membrane. Ubiquitinated by RNF185 during ER stress. Ubiquitinated by MARCHF2. Detected in epithelial cells in nasopharynx, submandibular gland, pancreas and ileum (at protein level). Expressed in the epididymis. In the caput section of the epididymis, expressed uniformly on both the luminal and basolateral sides of the ducts and on sperm in the caput lumen (at protein level). In the cauda, detected along the luminal border but not continuously and is also expressed on the basolateral surface. Within the caudal lumen, detected on sperm.

The protein localises to the apical cell membrane. Its subcellular location is the early endosome membrane. It is found in the cell membrane. The protein resides in the recycling endosome membrane. It localises to the endoplasmic reticulum membrane. The protein localises to the nucleus. It carries out the reaction ATP + H2O + closed Cl(-) channel = ADP + phosphate + open Cl(-) channel.. It catalyses the reaction chloride(in) = chloride(out). The catalysed reaction is hydrogencarbonate(in) = hydrogencarbonate(out). The enzyme catalyses ATP + H2O = ADP + phosphate + H(+). Functionally, epithelial ion channel that plays an important role in the regulation of epithelial ion and water transport and fluid homeostasis. Mediates the transport of chloride ions across the cell membrane. Possesses an intrinsic ATPase activity and utilizes ATP to gate its channel; the passive flow of anions through the channel is gated by cycles of ATP binding and hydrolysis by the ATP-binding domains. The ion channel is also permeable to HCO(3)(-); selectivity depends on the extracellular chloride concentration. Exerts its function also by modulating the activity of other ion channels and transporters. Contributes to the regulation of the pH and the ion content of the epithelial fluid layer. Modulates the activity of the epithelial sodium channel (ENaC) complex, in part by regulating the cell surface expression of the ENaC complex. May regulate bicarbonate secretion and salvage in epithelial cells by regulating the transporter SLC4A7. Can inhibit the chloride channel activity of ANO1. Plays a role in the chloride and bicarbonate homeostasis during sperm epididymal maturation and capacitation. This is Cystic fibrosis transmembrane conductance regulator from Rattus norvegicus (Rat).